The following is an 876-amino-acid chain: Exonuclease mut-7 homolog (876 aa).

The 55-residue stretch at 517-571 (GLSLLVQQVLGTALDKTQQLSNWDRRPLCEEQVIYAAADAYCLLEVHQALCREPA) folds into the 3'-5' exonuclease domain. Disordered regions lie at residues 578–607 (DLAG…APAA) and 751–781 (SHQE…AAPE).

The protein belongs to the mut-7 family. Mg(2+) is required as a cofactor.

In terms of biological role, possesses 3'-5' exoribonuclease activity. Required for 3'-end trimming of AGO1-bound miRNAs. The sequence is that of Exonuclease mut-7 homolog (EXD3) from Homo sapiens (Human).